The sequence spans 227 residues: Mitochondrial inner membrane protease ATP23 (227 aa).

An a divalent metal cation-binding site is contributed by H124. E125 is an active-site residue. H128 provides a ligand contact to a divalent metal cation.

Belongs to the peptidase M76 family. Interacts with ATP6.

It is found in the mitochondrion inner membrane. Its function is as follows. Has a dual role in the assembly of mitochondrial ATPase. Acts as a protease that removes the N-terminal 10 residues of mitochondrial ATPase CF(0) subunit 6 (ATP6) at the intermembrane space side. Also involved in the correct assembly of the membrane-embedded ATPase CF(0) particle, probably mediating association of ATP6 with the subunit 9 ring. The polypeptide is Mitochondrial inner membrane protease ATP23 (ATP23) (Saccharomyces cerevisiae (strain Lalvin EC1118 / Prise de mousse) (Baker's yeast)).